Reading from the N-terminus, the 94-residue chain is Aspartyl/glutamyl-tRNA(Asn/Gln) amidotransferase subunit C (94 aa).

Belongs to the GatC family. In terms of assembly, heterotrimer of A, B and C subunits.

The enzyme catalyses L-glutamyl-tRNA(Gln) + L-glutamine + ATP + H2O = L-glutaminyl-tRNA(Gln) + L-glutamate + ADP + phosphate + H(+). It carries out the reaction L-aspartyl-tRNA(Asn) + L-glutamine + ATP + H2O = L-asparaginyl-tRNA(Asn) + L-glutamate + ADP + phosphate + 2 H(+). Allows the formation of correctly charged Asn-tRNA(Asn) or Gln-tRNA(Gln) through the transamidation of misacylated Asp-tRNA(Asn) or Glu-tRNA(Gln) in organisms which lack either or both of asparaginyl-tRNA or glutaminyl-tRNA synthetases. The reaction takes place in the presence of glutamine and ATP through an activated phospho-Asp-tRNA(Asn) or phospho-Glu-tRNA(Gln). The protein is Aspartyl/glutamyl-tRNA(Asn/Gln) amidotransferase subunit C of Desulfatibacillum aliphaticivorans.